Here is a 316-residue protein sequence, read N- to C-terminus: UDP-N-acetylenolpyruvoylglucosamine reductase (316 aa).

The FAD-binding PCMH-type domain maps to 27–225 (VGGKAERFYR…KTAINALLKK (199 aa)). Arginine 190 is an active-site residue. The Proton donor role is filled by serine 239. Glutamate 309 is an active-site residue.

It belongs to the MurB family. FAD serves as cofactor.

The protein resides in the cytoplasm. It carries out the reaction UDP-N-acetyl-alpha-D-muramate + NADP(+) = UDP-N-acetyl-3-O-(1-carboxyvinyl)-alpha-D-glucosamine + NADPH + H(+). The protein operates within cell wall biogenesis; peptidoglycan biosynthesis. Functionally, cell wall formation. The chain is UDP-N-acetylenolpyruvoylglucosamine reductase from Coxiella burnetii (strain RSA 331 / Henzerling II).